The sequence spans 582 residues: ATP-dependent lipid A-core flippase (582 aa).

Helical transmembrane passes span 16 to 36 (LWPTIAPFKAGLIVAGVALIL), 63 to 83 (VLVWMPLVVIGLMILRGITSY), 153 to 173 (IIGLFIMMFYYSWQLSIILIV), 253 to 273 (PIIQLIASLALAFVLYAASFP), and 275 to 295 (VMDSLTAGTITVVFSSMIALM). The ABC transmembrane type-1 domain occupies 28-310 (IVAGVALILN…LTNVNAQFQR (283 aa)). The ABC transporter domain occupies 342–578 (VEFRNVTFTY…RGVYAQLHKM (237 aa)). ATP is bound at residue 376–383 (GRSGSGKS).

This sequence belongs to the ABC transporter superfamily. Lipid exporter (TC 3.A.1.106) family. In terms of assembly, homodimer.

The protein resides in the cell inner membrane. It carries out the reaction ATP + H2O + lipid A-core oligosaccharideSide 1 = ADP + phosphate + lipid A-core oligosaccharideSide 2.. Functionally, involved in lipopolysaccharide (LPS) biosynthesis. Translocates lipid A-core from the inner to the outer leaflet of the inner membrane. Transmembrane domains (TMD) form a pore in the inner membrane and the ATP-binding domain (NBD) is responsible for energy generation. The sequence is that of ATP-dependent lipid A-core flippase from Escherichia coli O157:H7.